The chain runs to 542 residues: CTP synthase (542 aa).

Residues 1-265 (MTRYVFITGG…DREILAHFQM (265 aa)) form an amidoligase domain region. Ser-13 contributes to the CTP binding site. Position 13 (Ser-13) interacts with UTP. ATP-binding positions include 14 to 19 (SLGKGL) and Asp-71. Residues Asp-71 and Glu-139 each coordinate Mg(2+). Residues 146-148 (DIE), 186-191 (KTKPTQ), and Lys-222 each bind CTP. UTP is bound by residues 186 to 191 (KTKPTQ) and Lys-222. 238 to 240 (RDV) serves as a coordination point for ATP. Positions 291-541 (TIAIVGKYTG…IAAAIEQSRL (251 aa)) constitute a Glutamine amidotransferase type-1 domain. Position 353 (Gly-353) interacts with L-glutamine. Cys-380 serves as the catalytic Nucleophile; for glutamine hydrolysis. L-glutamine is bound by residues 381-384 (FGMQ), Glu-404, and Arg-469. Residues His-514 and Glu-516 contribute to the active site.

The protein belongs to the CTP synthase family. As to quaternary structure, homotetramer.

It catalyses the reaction UTP + L-glutamine + ATP + H2O = CTP + L-glutamate + ADP + phosphate + 2 H(+). The catalysed reaction is L-glutamine + H2O = L-glutamate + NH4(+). It carries out the reaction UTP + NH4(+) + ATP = CTP + ADP + phosphate + 2 H(+). It participates in pyrimidine metabolism; CTP biosynthesis via de novo pathway; CTP from UDP: step 2/2. Its activity is regulated as follows. Allosterically activated by GTP, when glutamine is the substrate; GTP has no effect on the reaction when ammonia is the substrate. The allosteric effector GTP functions by stabilizing the protein conformation that binds the tetrahedral intermediate(s) formed during glutamine hydrolysis. Inhibited by the product CTP, via allosteric rather than competitive inhibition. Catalyzes the ATP-dependent amination of UTP to CTP with either L-glutamine or ammonia as the source of nitrogen. Regulates intracellular CTP levels through interactions with the four ribonucleotide triphosphates. The chain is CTP synthase from Methylorubrum populi (strain ATCC BAA-705 / NCIMB 13946 / BJ001) (Methylobacterium populi).